We begin with the raw amino-acid sequence, 857 residues long: Linoleate 9S-lipoxygenase 6 (857 aa).

One can recognise a PLAT domain in the interval 26-156 (NALDFTDLAG…RYKSDRIFFA (131 aa)). The Lipoxygenase domain maps to 159-857 (PYLPSETPEL…GKGIPNSVSI (699 aa)). The disordered stretch occupies residues 205–243 (NPDQGEQNVRTTLGGSADYPYPRRGRTGRPPTRTDPKSE). Residues 208-218 (QGEQNVRTTLG) are compositionally biased toward polar residues. 5 residues coordinate Fe cation: H518, H523, H709, N713, and I857.

Belongs to the lipoxygenase family. Monomer. Fe cation is required as a cofactor. In terms of tissue distribution, expressed in tubers and roots. Detected in leaves, petioles and stems.

The protein resides in the cytoplasm. The catalysed reaction is (9Z,12Z)-octadecadienoate + O2 = (9S)-hydroperoxy-(10E,12Z)-octadecadienoate. It functions in the pathway lipid metabolism; oxylipin biosynthesis. Plant lipoxygenases may be involved in a number of diverse aspects of plant physiology including growth and development, pest resistance, and senescence or responses to wounding. Catalyzes the hydroperoxidation of lipids containing a cis,cis-1,4-pentadiene structure. Linoleic and linolenic acids are the preferred substrates, but is also active with arachidonic acid. The products are almost exclusively the S enantiomers. This Solanum tuberosum (Potato) protein is Linoleate 9S-lipoxygenase 6 (LOX1.6).